We begin with the raw amino-acid sequence, 253 residues long: Imidazole glycerol phosphate synthase subunit HisF (253 aa).

Residues Asp-11 and Asp-130 contribute to the active site.

This sequence belongs to the HisA/HisF family. As to quaternary structure, heterodimer of HisH and HisF.

Its subcellular location is the cytoplasm. It carries out the reaction 5-[(5-phospho-1-deoxy-D-ribulos-1-ylimino)methylamino]-1-(5-phospho-beta-D-ribosyl)imidazole-4-carboxamide + L-glutamine = D-erythro-1-(imidazol-4-yl)glycerol 3-phosphate + 5-amino-1-(5-phospho-beta-D-ribosyl)imidazole-4-carboxamide + L-glutamate + H(+). Its pathway is amino-acid biosynthesis; L-histidine biosynthesis; L-histidine from 5-phospho-alpha-D-ribose 1-diphosphate: step 5/9. Its function is as follows. IGPS catalyzes the conversion of PRFAR and glutamine to IGP, AICAR and glutamate. The HisF subunit catalyzes the cyclization activity that produces IGP and AICAR from PRFAR using the ammonia provided by the HisH subunit. The chain is Imidazole glycerol phosphate synthase subunit HisF from Dehalococcoides mccartyi (strain ATCC BAA-2266 / KCTC 15142 / 195) (Dehalococcoides ethenogenes (strain 195)).